Reading from the N-terminus, the 171-residue chain is UPF0398 protein MGAS10270_Spy1470 (171 aa).

The protein belongs to the UPF0398 family.

The protein is UPF0398 protein MGAS10270_Spy1470 of Streptococcus pyogenes serotype M2 (strain MGAS10270).